Here is a 357-residue protein sequence, read N- to C-terminus: 3-dehydroquinate synthase (357 aa).

NAD(+)-binding positions include 104–108 (GVVGD), 128–129 (TT), K141, and 168–171 (FLET). Residues E183, H243, and H260 each contribute to the Zn(2+) site.

Belongs to the sugar phosphate cyclases superfamily. Dehydroquinate synthase family. The cofactor is NAD(+). Co(2+) serves as cofactor. Requires Zn(2+) as cofactor.

It localises to the cytoplasm. The catalysed reaction is 7-phospho-2-dehydro-3-deoxy-D-arabino-heptonate = 3-dehydroquinate + phosphate. Its pathway is metabolic intermediate biosynthesis; chorismate biosynthesis; chorismate from D-erythrose 4-phosphate and phosphoenolpyruvate: step 2/7. Its function is as follows. Catalyzes the conversion of 3-deoxy-D-arabino-heptulosonate 7-phosphate (DAHP) to dehydroquinate (DHQ). The chain is 3-dehydroquinate synthase from Streptococcus pyogenes serotype M6 (strain ATCC BAA-946 / MGAS10394).